We begin with the raw amino-acid sequence, 665 residues long: F-box/LRR-repeat protein 3 (665 aa).

Positions 11–60 constitute an F-box domain; that stretch reads KPFDLLSEELVFIILDLISPNPSDLKSFSLTCKSFYQLESKHRGSLKPLR. LRR repeat units follow at residues 61 to 81, 82 to 108, 109 to 134, 135 to 159, 160 to 185, 186 to 211, 214 to 235, 236 to 261, 262 to 287, 288 to 312, 313 to 338, 339 to 364, 365 to 390, 391 to 416, 419 to 440, 441 to 466, 467 to 492, 493 to 517, 518 to 543, 544 to 569, and 594 to 619; these read SDYL…DLTF, CPRV…DLSR, SGSF…DLSN, ATEM…KLGR, CKML…SLKW, CVGV…DLSY, ITGK…LLEG, CFGV…DASS, CQNL…DLSH, CSSV…IRLD, GCSV…SLSK, CVSV…DITC, CRKL…KMES, CSLV…DLTD, IDDE…KLGI, CLNI…DLYR, SVGI…NISY, CQDI…ESRG, CPNI…DLKK, CPSI…NVSD, and SSGL…KLHA.

This chain is F-box/LRR-repeat protein 3 (FBL3), found in Arabidopsis thaliana (Mouse-ear cress).